Here is a 290-residue protein sequence, read N- to C-terminus: OTU domain-containing protein 6A (290 aa).

Residues 27–117 (QTLKASVPKN…RRHQERMPAA (91 aa)) form a disordered region. A compositionally biased stretch (basic and acidic residues) spans 49-68 (SRLEAEMEQRHKQELEKFGE). Positions 95-108 (KAQKRRDRRAHQER) are enriched in basic residues. The OTU domain maps to 142-276 (LEMKTIPADG…GEHYNSVKPI (135 aa)). The interval 147–153 (IPADGHC) is cys-loop. The active site involves aspartate 150. The Nucleophile role is filled by cysteine 153. The segment at 211-221 (IVHNASWGGQL) is variable-loop. The his-loop stretch occupies residues 259–269 (YLHYACDFGEH). Histidine 269 is a catalytic residue.

The catalysed reaction is Thiol-dependent hydrolysis of ester, thioester, amide, peptide and isopeptide bonds formed by the C-terminal Gly of ubiquitin (a 76-residue protein attached to proteins as an intracellular targeting signal).. Its function is as follows. Deubiquitinating enzyme that hydrolyzes 'Lys-27'-, 'Lys-29'- and 'Lys-33'-linked polyubiquitin chains. Also able to hydrolyze 'Lys-11'-linked ubiquitin chains. This Mus musculus (Mouse) protein is OTU domain-containing protein 6A (Otud6a).